We begin with the raw amino-acid sequence, 1007 residues long: Kinesin-like protein KIN-14F (1007 aa).

The Calponin-homology (CH) domain occupies 41-187; sequence AARRNEAAGW…CVLALKSYGD (147 aa). Residues 390-715 form the Kinesin motor domain; the sequence is SIRVYCRVRP…LKFAERVSTV (326 aa). ATP is bound at residue 472 to 479; it reads GQTGSGKT. The stretch at 718-748 forms a coiled coil; sequence GAARLNKESGEVKELKEQIARLKSSLAMKDS. A compositionally biased stretch (basic and acidic residues) spans 885–904; it reads KQYLRNNSRKKDGNEFEQQR. Disordered stretches follow at residues 885-924 and 944-1007; these read KQYLRNNSRKKDGNEFEQQRPRFYSTNTDDSDDIDIATSD and SENG…AGTK. The segment covering 963–1001 has biased composition (polar residues); sequence TRTPLHSQIPSASRKTSNGNRSGRQPLSGSDSRRLSSNG.

Belongs to the TRAFAC class myosin-kinesin ATPase superfamily. Kinesin family. KIN-14 subfamily.

This Oryza sativa subsp. japonica (Rice) protein is Kinesin-like protein KIN-14F.